A 363-amino-acid chain; its full sequence is DNA replication and repair protein RecF (363 aa).

30–37 (GNNAQGKT) is an ATP binding site.

It belongs to the RecF family.

Its subcellular location is the cytoplasm. The RecF protein is involved in DNA metabolism; it is required for DNA replication and normal SOS inducibility. RecF binds preferentially to single-stranded, linear DNA. It also seems to bind ATP. The sequence is that of DNA replication and repair protein RecF from Clostridium acetobutylicum (strain ATCC 824 / DSM 792 / JCM 1419 / IAM 19013 / LMG 5710 / NBRC 13948 / NRRL B-527 / VKM B-1787 / 2291 / W).